The chain runs to 455 residues: Argininosuccinate lyase (455 aa).

The protein belongs to the lyase 1 family. Argininosuccinate lyase subfamily.

The protein resides in the cytoplasm. It carries out the reaction 2-(N(omega)-L-arginino)succinate = fumarate + L-arginine. The protein operates within amino-acid biosynthesis; L-arginine biosynthesis; L-arginine from L-ornithine and carbamoyl phosphate: step 3/3. This Caulobacter sp. (strain K31) protein is Argininosuccinate lyase.